A 252-amino-acid chain; its full sequence is uncharacterized protein (252 aa).

The protein belongs to the LarE family.

This is an uncharacterized protein from Methanocaldococcus jannaschii (strain ATCC 43067 / DSM 2661 / JAL-1 / JCM 10045 / NBRC 100440) (Methanococcus jannaschii).